We begin with the raw amino-acid sequence, 437 residues long: Transmembrane protease serine 4 (437 aa).

Topologically, residues 1 to 32 (MLQDPDSDQPLNSLDVKPLRKPRIPMETFRKV) are cytoplasmic. A helical; Signal-anchor for type II membrane protein membrane pass occupies residues 33–53 (GIPIIIALLSLASIIIVVVLI). Topologically, residues 54-437 (KVILDKYYFL…WIYNVWKAEL (384 aa)) are extracellular. Positions 61–93 (YFLCGQPLHFIPRKQLCDGELDCPLGEDEEHCV) constitute an LDL-receptor class A domain. 8 cysteine pairs are disulfide-bonded: C64-C83, C77-C92, C127-C183, C140-C193, C196-C310, C230-C246, C356-C372, and C383-C410. One can recognise an SRCR domain in the interval 94 to 204 (KSFPEGPAVA…ACGKSLKTPR (111 aa)). 2 N-linked (GlcNAc...) asparagine glycosylation sites follow: N130 and N178. Residues 205–434 (VVGVEEASVD…YLNWIYNVWK (230 aa)) form the Peptidase S1 domain. Active-site charge relay system residues include H245 and D290. S387 serves as the catalytic Charge relay system.

It belongs to the peptidase S1 family. Proteolytically processed; probably by an autocatalytic mechanism. High levels in pancreatic, gastric, colorectal and ampullary cancer. Very weak expression in normal gastrointestinal and urogenital tract. Coexpressed with ACE2 within mature enterocytes.

The protein localises to the cell membrane. It localises to the secreted. Functionally, plasma membrane-anchored serine protease that directly induces processing of pro-uPA/PLAU into the active form through proteolytic activity. Seems to be capable of activating ENaC. Its function is as follows. (Microbial infection) In gut epithelial cells, facilitates human coronavirus SARS-CoV-2 infection through, at least, the cleavage of coronavirus spike glycoproteins which activates the glycoprotein for host cell entry. The sequence is that of Transmembrane protease serine 4 from Homo sapiens (Human).